Here is a 180-residue protein sequence, read N- to C-terminus: Major urinary protein 1 (180 aa).

An N-terminal signal peptide occupies residues 1–18; sequence MKMLLLLCLGLTLVCVHA. Residues Cys82 and Cys175 are joined by a disulfide bond.

Belongs to the calycin superfamily. Lipocalin family. Abundant in the urine of adult male mice but absent from that of females.

Its subcellular location is the secreted. Functionally, binds pheromones that are released from drying urine of males. These pheromones affect the sexual behavior of females. The protein is Major urinary protein 1 (Mup1) of Mus musculus (Mouse).